The following is an 800-amino-acid chain: Transducin beta-like protein 3 (800 aa).

The residue at position 2 (Ala-2) is an N-acetylalanine. 13 WD repeats span residues 64–105 (EDQE…RLWK), 107–146 (IHTA…GTHH), 149–190 (GSPG…CLAV), 193–232 (AHYS…TSRT), 245–284 (LPEE…CVYT), 290–329 (GLRQ…LQKQ), 332–372 (GYSE…CQIL), 374–413 (GHTD…QVAC), 419–459 (GHTH…PSKN), 477–516 (CHDK…LLGV), 519–560 (GHRR…KTFE), 562–602 (HDAS…RTLD), and 604–642 (HEDK…EQAE). Lys-407 is covalently cross-linked (Glycyl lysine isopeptide (Lys-Gly) (interchain with G-Cter in SUMO2)).

As to quaternary structure, part of the small subunit (SSU) processome, composed of more than 70 proteins and the RNA chaperone small nucleolar RNA (snoRNA) U3.

It is found in the nucleus. Its subcellular location is the nucleolus. Functionally, part of the small subunit (SSU) processome, first precursor of the small eukaryotic ribosomal subunit. During the assembly of the SSU processome in the nucleolus, many ribosome biogenesis factors, an RNA chaperone and ribosomal proteins associate with the nascent pre-rRNA and work in concert to generate RNA folding, modifications, rearrangements and cleavage as well as targeted degradation of pre-ribosomal RNA by the RNA exosome. The protein is Transducin beta-like protein 3 (Tbl3) of Rattus norvegicus (Rat).